The primary structure comprises 354 residues: Transcription factor ATOH1 (354 aa).

Residues 1–21 show a composition bias toward basic and acidic residues; sequence MSRLLHAEEWAEVKELGDHHR. Disordered regions lie at residues 1-55 and 91-122; these read MSRL…ELSL and EAAA…PGPV. A compositionally biased stretch (pro residues) spans 26–38; it reads HHLPQPPPPPQPP. Residues 94-107 show a composition bias toward basic and acidic residues; sequence APRDEVDGRGELVR. A compositionally biased stretch (low complexity) spans 108–122; the sequence is RSSGGASSSKSPGPV. The bHLH domain maps to 159-211; that stretch reads QRRLAANARERRRMHGLNHAFDQLRNVIPSFNNDKKLSKYETLQMAQIYINAL. Disordered stretches follow at residues 216 to 277 and 312 to 354; these read QTPS…TRFS and SPSL…DEAS. Over residues 250-264 the composition is skewed to low complexity; that stretch reads NATAAGAQQASGGSQ. Positions 335-354 are enriched in basic and acidic residues; that stretch reads HRSDGEFSPHSHYSDSDEAS.

As to quaternary structure, efficient DNA binding requires dimerization with another bHLH protein.

The protein resides in the nucleus. In terms of biological role, transcriptional regulator. Activates E box-dependent transcription in collaboration with TCF3/E47, but the activity is completely antagonized by the negative regulator of neurogenesis HES1. Plays a role in the differentiation of subsets of neural cells by activating E box-dependent transcription. This is Transcription factor ATOH1 from Homo sapiens (Human).